A 146-amino-acid polypeptide reads, in one-letter code: Leghemoglobin 2 (146 aa).

Residues 2–146 (GFTAQQDALV…LAAAIKKAMS (145 aa)) form the Globin domain. A Nitrated tyrosine modification is found at Tyr-30. Position 45 (Ser-45) interacts with heme b. At Ser-45 the chain carries Phosphoserine. His-61 lines the O2 pocket. Lys-64, His-93, and Lys-96 together coordinate heme b. A Nitrated tyrosine modification is found at Tyr-134.

Belongs to the plant globin family. In terms of assembly, monomer. Nitrated in effective nodules and particularly in hypoxic conditions; this mechanism may play a protective role in the symbiosis by buffering toxic peroxynitrite NO(2)(-). Nitration level decrease during nodule senescence. Post-translationally, phosphorylation at Ser-45 disrupts the molecular environment of its porphyrin ring oxygen binding pocket, thus leading to a reduced oxygen consumption and to the delivery of oxygen O(2) to symbiosomes. Specifically and strongly expressed in root nodules and at low levels in seedlings.

The protein resides in the cytoplasm. Its subcellular location is the cytosol. It localises to the nucleus. In terms of biological role, leghemoglobin that reversibly binds oxygen O(2) through a pentacoordinated heme iron. In root nodules, facilitates the diffusion of oxygen to the bacteroids while preventing the bacterial nitrogenase from being inactivated by buffering dioxygen, nitric oxide and carbon monoxide, and promoting the formation of reactive oxygen species (ROS, e.g. H(2)O(2)). This role is essential for symbiotic nitrogen fixation (SNF). The polypeptide is Leghemoglobin 2 (Lotus japonicus (Lotus corniculatus var. japonicus)).